The chain runs to 72 residues: Crustacean hyperglycemic hormone (72 aa).

Gln-1 bears the Pyrrolidone carboxylic acid mark. D-phenylalanine; in form CHH-II is present on Phe-3. Disulfide bonds link Cys-7-Cys-43, Cys-23-Cys-39, and Cys-26-Cys-52. Val-72 is subject to Valine amide.

Post-translationally, stereoinversion of L-Phe (in CHH-I) to D-Phe (in CHH-II) the two forms are present in a ratio 3:1 (CHH-I/CHH-II). As to expression, produced by the medulla terminalis X-organ in the eyestalks and transported to the sinus gland where they are stored and released.

The protein resides in the secreted. In terms of biological role, hormone found in the sinus gland of isopods and decapods which controls the blood sugar level. Has a secretagogue action over the amylase released from the midgut gland. May act as a stress hormone and may be involved in the control of molting and reproduction. In Procambarus bouvieri (Mexican crayfish), this protein is Crustacean hyperglycemic hormone.